Reading from the N-terminus, the 203-residue chain is ATP synthase subunit b (203 aa).

The chain crosses the membrane as a helical span at residues 14-34 (FVWPLLGAGLLLAAEGVAWAS).

This sequence belongs to the ATPase B chain family. In terms of assembly, F-type ATPases have 2 components, F(1) - the catalytic core - and F(0) - the membrane proton channel. F(1) has five subunits: alpha(3), beta(3), gamma(1), delta(1), epsilon(1). F(0) has three main subunits: a(1), b(2) and c(10-14). The alpha and beta chains form an alternating ring which encloses part of the gamma chain. F(1) is attached to F(0) by a central stalk formed by the gamma and epsilon chains, while a peripheral stalk is formed by the delta and b chains.

It is found in the cell inner membrane. Its function is as follows. F(1)F(0) ATP synthase produces ATP from ADP in the presence of a proton or sodium gradient. F-type ATPases consist of two structural domains, F(1) containing the extramembraneous catalytic core and F(0) containing the membrane proton channel, linked together by a central stalk and a peripheral stalk. During catalysis, ATP synthesis in the catalytic domain of F(1) is coupled via a rotary mechanism of the central stalk subunits to proton translocation. Component of the F(0) channel, it forms part of the peripheral stalk, linking F(1) to F(0). This chain is ATP synthase subunit b, found in Syntrophobacter fumaroxidans (strain DSM 10017 / MPOB).